A 209-amino-acid chain; its full sequence is Superoxide dismutase [Mn/Fe] (209 aa).

Positions 38, 90, 172, and 176 each coordinate Fe(3+). Histidine 38, histidine 90, aspartate 172, and histidine 176 together coordinate Mn(2+).

It belongs to the iron/manganese superoxide dismutase family. Mn(2+) is required as a cofactor. Fe(3+) serves as cofactor.

It carries out the reaction 2 superoxide + 2 H(+) = H2O2 + O2. In terms of biological role, destroys superoxide anion radicals which are normally produced within the cells and which are toxic to biological systems. Catalyzes the dismutation of superoxide anion radicals into O2 and H2O2 by successive reduction and oxidation of the transition metal ion at the active site. The chain is Superoxide dismutase [Mn/Fe] (sodB) from Rickettsia prowazekii (strain Madrid E).